The sequence spans 828 residues: Periplasmic nitrate reductase (828 aa).

Positions 1-31 (MKLSRRSFMKANAVAAAAAAAGLSVPGVARA) form a signal peptide, tat-type signal. In terms of domain architecture, 4Fe-4S Mo/W bis-MGD-type spans 39 to 95 (IKWDKAPCRFCGTGCGVLVGTQQGRVVACQGDPDAPVNRGLNCIKGYFLPKIMYGKD). Positions 46, 49, 53, and 81 each coordinate [4Fe-4S] cluster. Mo-bis(molybdopterin guanine dinucleotide) is bound by residues Lys-83, Gln-150, Asn-175, Cys-179, 212 to 219 (WGSNMAEM), 243 to 247 (STFQH), 262 to 264 (QSD), Met-372, Gln-376, Asn-482, 508 to 509 (SD), Lys-531, Asp-558, and 718 to 727 (TGRVLEHWHT). Phe-794 lines the substrate pocket. Residues Asn-802 and Lys-819 each contribute to the Mo-bis(molybdopterin guanine dinucleotide) site.

The protein belongs to the prokaryotic molybdopterin-containing oxidoreductase family. NasA/NapA/NarB subfamily. In terms of assembly, component of the periplasmic nitrate reductase NapAB complex composed of NapA and NapB. It depends on [4Fe-4S] cluster as a cofactor. Mo-bis(molybdopterin guanine dinucleotide) serves as cofactor. Post-translationally, predicted to be exported by the Tat system. The position of the signal peptide cleavage has not been experimentally proven.

The protein localises to the periplasm. It carries out the reaction 2 Fe(II)-[cytochrome] + nitrate + 2 H(+) = 2 Fe(III)-[cytochrome] + nitrite + H2O. Catalytic subunit of the periplasmic nitrate reductase complex NapAB. Receives electrons from NapB and catalyzes the reduction of nitrate to nitrite. The protein is Periplasmic nitrate reductase of Salmonella schwarzengrund (strain CVM19633).